The chain runs to 115 residues: Superoxide reductase (115 aa).

Glu14, His16, His41, His47, Cys102, and His105 together coordinate Fe cation.

It belongs to the desulfoferrodoxin family. As to quaternary structure, homotetramer. It depends on Fe cation as a cofactor.

The catalysed reaction is reduced [rubredoxin] + superoxide + 2 H(+) = oxidized [rubredoxin] + H2O2. Its function is as follows. Uses electrons from reduced NADP, by way of rubredoxin and an oxidoreductase, to catalyze the reduction of superoxide to hydrogen peroxide. This chain is Superoxide reductase (sorA), found in Thermococcus kodakarensis (strain ATCC BAA-918 / JCM 12380 / KOD1) (Pyrococcus kodakaraensis (strain KOD1)).